Consider the following 452-residue polypeptide: Trigger factor (452 aa).

Positions 171–256 constitute a PPIase FKBP-type domain; that stretch reads GDRVKVNFKG…ATAIETPEEK (86 aa).

The protein belongs to the FKBP-type PPIase family. Tig subfamily.

The protein localises to the cytoplasm. The catalysed reaction is [protein]-peptidylproline (omega=180) = [protein]-peptidylproline (omega=0). Functionally, involved in protein export. Acts as a chaperone by maintaining the newly synthesized protein in an open conformation. Functions as a peptidyl-prolyl cis-trans isomerase. This chain is Trigger factor, found in Bradyrhizobium sp. (strain BTAi1 / ATCC BAA-1182).